The sequence spans 241 residues: Aspartate/glutamate leucyltransferase (241 aa).

This sequence belongs to the R-transferase family. Bpt subfamily.

The protein resides in the cytoplasm. It catalyses the reaction N-terminal L-glutamyl-[protein] + L-leucyl-tRNA(Leu) = N-terminal L-leucyl-L-glutamyl-[protein] + tRNA(Leu) + H(+). The enzyme catalyses N-terminal L-aspartyl-[protein] + L-leucyl-tRNA(Leu) = N-terminal L-leucyl-L-aspartyl-[protein] + tRNA(Leu) + H(+). Functions in the N-end rule pathway of protein degradation where it conjugates Leu from its aminoacyl-tRNA to the N-termini of proteins containing an N-terminal aspartate or glutamate. In Helicobacter hepaticus (strain ATCC 51449 / 3B1), this protein is Aspartate/glutamate leucyltransferase.